The following is a 188-amino-acid chain: Elongation factor P (188 aa).

This sequence belongs to the elongation factor P family.

The protein localises to the cytoplasm. It functions in the pathway protein biosynthesis; polypeptide chain elongation. In terms of biological role, involved in peptide bond synthesis. Stimulates efficient translation and peptide-bond synthesis on native or reconstituted 70S ribosomes in vitro. Probably functions indirectly by altering the affinity of the ribosome for aminoacyl-tRNA, thus increasing their reactivity as acceptors for peptidyl transferase. In Rhodopseudomonas palustris (strain BisB5), this protein is Elongation factor P.